The following is a 104-amino-acid chain: Protein SMALL AUXIN UP-REGULATED RNA 9 (104 aa).

Belongs to the ARG7 family. As to quaternary structure, interacts with and inhibits PP2C-D subfamily of type 2C phosphatases such as PP2C67/PP2C-D1. As to expression, expressed in etiolated hypocotyls, petioles, leaves and flowers.

Its subcellular location is the cell membrane. Provide a mechanistic link between auxin and plasma membrane H(+)-ATPases (PM H(+)-ATPases, e.g. AHA1 and AHA2), and triggers PM H(+)-ATPases activity by promoting phosphorylation of their C-terminal autoinhibitory domain as a result of PP2C-D subfamily of type 2C phosphatases inhibition, thus leading to the acidification of the apoplast and the facilitation of solutes and water uptake to drive cell expansion. Triggers plant growth probably by promoting cell elongation. Regulates branch angles and bending. Probably involved in light intensity mediated root development. In Arabidopsis thaliana (Mouse-ear cress), this protein is Protein SMALL AUXIN UP-REGULATED RNA 9.